Reading from the N-terminus, the 1843-residue chain is Cilia- and flagella-associated protein 44 (1843 aa).

The tract at residues 1–86 (MKEPDDQDTS…PPVEVKEEPE (86 aa)) is disordered. The span at 29–39 (LKSSQDTTADS) shows a compositional bias: polar residues. A compositionally biased stretch (acidic residues) spans 41-58 (TDGEESYLGDDLDLDDMD). 7 WD repeats span residues 214 to 255 (GAEK…PILR), 258 to 297 (AFSQDVFKVTFNPDNDEQLTTSGSGHIKFWEMAFTFTGLK), 308 to 346 (TSTSDIEGYAELPDGKVLSGSEWGNLLLWEGSLIKVELC), 353 to 390 (CHSGSINQIMLDEGEVITAGSDGSVRIWDFETIDTADV), 456 to 495 (FHSGPIAALAVSPLTYLMATTAMDCSVRVYDFSSKNPLVH), 497 to 541 (KFKQ…GLTV), and 561 to 600 (PHTDEVTALAYERDGDILATGSEDKTVFFFDVEKEYKPIG). Residues 701–726 (REAFGEEEIPEEETSEEGEEEEPPLP) form a disordered region. Residues 705–724 (GEEEIPEEETSEEGEEEEPP) show a composition bias toward acidic residues. WD repeat units follow at residues 790–829 (TEDNPIRNITFSNDQTMMFCGMTNGAIRVYVLSENDPFLV) and 842–881 (NNYGSIKSITSSFDDQYLLTAGEDGNIFVFDIFSEFIVPK). Disordered regions lie at residues 1040-1086 (YSKL…SVLE), 1266-1291 (QRKQKKRQDKSSSKQSGTGSGGSAGG), and 1488-1524 (KEVEGDADEDEESEESSEEESSLESDEDASGSEDDVF). Basic and acidic residues predominate over residues 1047–1071 (SQSERRQSKMERLEKEGPGKKESQR). Position 1069 is a phosphoserine (serine 1069). A compositionally biased stretch (polar residues) spans 1072-1081 (DTGGSISLQE). Residues 1492-1524 (GDADEDEESEESSEEESSLESDEDASGSEDDVF) show a composition bias toward acidic residues. Coiled coils occupy residues 1548–1603 (RLDI…RLNE) and 1631–1665 (LVFSNHSLDRLQERIVQLQEENAKQQKLNKECRER). The WD 10 repeat unit spans residues 1699–1744 (IDLEALQTLSVNTTLEELKIKKLRKELSNAKELRMWEEKIAQVRWD).

Belongs to the CFAP44 family. In terms of tissue distribution, expressed in testis.

The protein resides in the cell projection. Its subcellular location is the cilium. The protein localises to the flagellum. It is found in the cytoplasm. It localises to the cytoskeleton. The protein resides in the flagellum axoneme. Flagellar protein involved in sperm flagellum axoneme organization and function. This is Cilia- and flagella-associated protein 44 from Mus musculus (Mouse).